A 701-amino-acid polypeptide reads, in one-letter code: Aryl hydrocarbon receptor repressor (701 aa).

The tract at residues 1–38 is disordered; sequence MMIPSGECTYAGRKRRKPIQKRRLTMGTEKSNPSKRHR. Residues 12–24 are compositionally biased toward basic residues; the sequence is GRKRRKPIQKRRL. One can recognise a bHLH domain in the interval 25-78; that stretch reads TMGTEKSNPSKRHRDRLNTELDHLASLLPFSPDIISKLDKLSVLRLSVSYLRVK. Residues 106 to 176 enclose the PAS domain; the sequence is PVQEGRLLLE…RQLHWAMDPP (71 aa). Disordered regions lie at residues 360–389 and 409–436; these read DPKG…QREM and TEQR…LVPH. The span at 365–375 shows a compositional bias: basic and acidic residues; the sequence is SGDREEDDQKH. The span at 414–430 shows a compositional bias: polar residues; sequence QEGTTKLTRQPSKSEPS. Residues 555-701 are needed for transcriptional repression; the sequence is ASTTSCVWLG…SKGSDGIFLP (147 aa). Glycyl lysine isopeptide (Lys-Gly) (interchain with G-Cter in SUMO2) cross-links involve residues K583 and K660.

As to quaternary structure, interacts with ARNT, ANKRA2, HDAC4 and HDAC5. Interacts with ARNT; forms a heterodimer with ARNT. As to expression, highly expressed in testis and weakly expressed in heart and liver. Highly expressed in small intestine and cecum in a male-dominant sexual dimorphic fashion.

The protein localises to the cytoplasm. Its subcellular location is the nucleus. Mediates dioxin toxicity and is involved in regulation of cell growth and differentiation. Represses the transcription activity of AHR by competing with this transcription factor for heterodimer formation with the ARNT and subsequently binding to the xenobiotic response element (XRE) sequence present in the promoter regulatory region of variety of genes. Represses CYP1A1 by binding the XRE sequence and recruiting ANKRA2, HDAC4 and/or HDAC5. Autoregulates its expression by associating with its own XRE site. The sequence is that of Aryl hydrocarbon receptor repressor (Ahrr) from Rattus norvegicus (Rat).